The following is a 62-amino-acid chain: Small ribosomal subunit protein eS31 (62 aa).

4 residues coordinate Zn(2+): Cys29, Cys32, Cys48, and Cys51. The C4-type zinc-finger motif lies at 29-51 (CPRCGSFMAFHKWPVPRWHCGKC).

Belongs to the eukaryotic ribosomal protein eS31 family. In terms of assembly, part of the 30S ribosomal subunit. Zn(2+) serves as cofactor.

The chain is Small ribosomal subunit protein eS31 from Hyperthermus butylicus (strain DSM 5456 / JCM 9403 / PLM1-5).